Here is a 301-residue protein sequence, read N- to C-terminus: Glycine--tRNA ligase alpha subunit (301 aa).

It belongs to the class-II aminoacyl-tRNA synthetase family. As to quaternary structure, tetramer of two alpha and two beta subunits.

The protein localises to the cytoplasm. The enzyme catalyses tRNA(Gly) + glycine + ATP = glycyl-tRNA(Gly) + AMP + diphosphate. This Shewanella amazonensis (strain ATCC BAA-1098 / SB2B) protein is Glycine--tRNA ligase alpha subunit.